Reading from the N-terminus, the 1137-residue chain is DNA-directed RNA polymerase III subunit RPC2 (1137 aa).

The C4-type zinc-finger motif lies at 1084-1099 (DVCRTCGRMAYCSWCH). Residues Cys-1086, Cys-1089, Cys-1098, and Cys-1101 each coordinate Zn(2+).

The protein belongs to the RNA polymerase beta chain family. In terms of assembly, component of the RNA polymerase III (Pol III) complex consisting of 17 subunits.

It is found in the nucleus. It carries out the reaction RNA(n) + a ribonucleoside 5'-triphosphate = RNA(n+1) + diphosphate. In terms of biological role, DNA-dependent RNA polymerase catalyzes the transcription of DNA into RNA using the four ribonucleoside triphosphates as substrates. Second largest core component of RNA polymerase III which synthesizes small RNAs, such as 5S rRNA and tRNAs. Proposed to contribute to the polymerase catalytic activity and forms the polymerase active center together with the largest subunit. Pol III is composed of mobile elements and Polr3B is part of the core element with the central large cleft and probably a clamp element that moves to open and close the cleft. The protein is DNA-directed RNA polymerase III subunit RPC2 of Drosophila melanogaster (Fruit fly).